A 252-amino-acid polypeptide reads, in one-letter code: Movement protein (252 aa).

The interval 222–252 (YDGPYRPATTRPKSLLSSEDVKRASNKKNSS) is disordered.

The protein belongs to the tobamovirus movement protein family.

Transports viral genome to neighboring plant cells directly through plasmosdesmata, without any budding. The movement protein allows efficient cell to cell propagation, by bypassing the host cell wall barrier. Displays RNA-binding activity. The chain is Movement protein from Bidens pilosa (Hairy beggarticks).